A 226-amino-acid polypeptide reads, in one-letter code: tRNA (guanine-N(1)-)-methyltransferase (226 aa).

S-adenosyl-L-methionine-binding positions include Gly-112 and 132 to 137 (IGDYVL).

Belongs to the RNA methyltransferase TrmD family. As to quaternary structure, homodimer.

The protein localises to the cytoplasm. It catalyses the reaction guanosine(37) in tRNA + S-adenosyl-L-methionine = N(1)-methylguanosine(37) in tRNA + S-adenosyl-L-homocysteine + H(+). Specifically methylates guanosine-37 in various tRNAs. The protein is tRNA (guanine-N(1)-)-methyltransferase of Christiangramia forsetii (strain DSM 17595 / CGMCC 1.15422 / KT0803) (Gramella forsetii).